The following is a 378-amino-acid chain: Putative glutamate--cysteine ligase 2 (378 aa).

It belongs to the glutamate--cysteine ligase type 2 family. YbdK subfamily.

The enzyme catalyses L-cysteine + L-glutamate + ATP = gamma-L-glutamyl-L-cysteine + ADP + phosphate + H(+). Its function is as follows. ATP-dependent carboxylate-amine ligase which exhibits weak glutamate--cysteine ligase activity. The protein is Putative glutamate--cysteine ligase 2 of Jannaschia sp. (strain CCS1).